The following is a 341-amino-acid chain: MSLKFQKLSGLVLCFLIALPAWFLGQSFPLVGAPVFAIFLGMLLAIFYKNREHTEAGIAFTSKYILQFAVVLLGFGLNLSQVLTVGKTSLPIIVATISSSLLLAFLLQKWFKLDVNTATLVGVGSSICGGSAIAATAPVIQADGDEIAQSISVIFLFNILAALIFPTLGDMIGLSNHGFALFAGTAVNDTSSVTATAAAWDGLHHSNTLDGATIVKLTRTLAIIPITLGLSFYQVYKTKKVGKNQQHTVKLKKVFPMFILYFILASIITTILTALGVNPIFFTPLKTLSKFCIVMAMGAIGLNTNIVKLVKTGGQAIVLGASCWIVITLVSLGMQHLLGIW.

11 helical membrane passes run Lys-7 to Leu-24, Phe-28 to Phe-47, Phe-68 to Val-85, Leu-90 to Leu-107, Leu-120 to Ala-142, Ile-147 to Gly-169, Gly-178 to Trp-200, Gly-211 to Tyr-233, Val-254 to Gly-276, Phe-291 to Val-310, and Ile-317 to Gly-339.

This sequence belongs to the UPF0324 family.

Its subcellular location is the cell membrane. The sequence is that of UPF0324 membrane protein SMU_2059c from Streptococcus mutans serotype c (strain ATCC 700610 / UA159).